A 283-amino-acid chain; its full sequence is MSGITAALVKELRERTGAGMMECKKALVEANGDIELAIDNMRKSGQAKAAKKAGRVAAEGIILAEVAADGKFGALVELNCETDFVAKDAGFIAFGKEVMATVLADKISDIETLKAKFEEQRTALVAKIGENINIRRVSVLEGEQLGTYLHGARIGVLVAAEGANEELIKHVAMHIAASKPEYVNPSDVPADVVDREHQIQLDIAMQSGKPREIAEKMVSGRMNKFTGEISLTGQNFVMDPSKTVGDLLKENNATVTSFIRYEVGEGIEKVETDFAAEVAAMSK.

The tract at residues 82-85 is involved in Mg(2+) ion dislocation from EF-Tu; the sequence is TDFV.

This sequence belongs to the EF-Ts family.

The protein resides in the cytoplasm. Its function is as follows. Associates with the EF-Tu.GDP complex and induces the exchange of GDP to GTP. It remains bound to the aminoacyl-tRNA.EF-Tu.GTP complex up to the GTP hydrolysis stage on the ribosome. The polypeptide is Elongation factor Ts (Photorhabdus laumondii subsp. laumondii (strain DSM 15139 / CIP 105565 / TT01) (Photorhabdus luminescens subsp. laumondii)).